A 303-amino-acid chain; its full sequence is Proline dehydrogenase 2 (303 aa).

Lys96 provides a ligand contact to substrate. Asp130 is a catalytic residue. FAD-binding residues include Met131 and Gln159. Arg180 is an active-site residue. FAD is bound by residues 183–185 (KGA) and 222–223 (TH). Residue 284-285 (RR) coordinates substrate.

This sequence belongs to the proline dehydrogenase family. FAD is required as a cofactor.

The enzyme catalyses L-proline + a quinone = (S)-1-pyrroline-5-carboxylate + a quinol + H(+). The protein operates within amino-acid degradation; L-proline degradation into L-glutamate; L-glutamate from L-proline: step 1/2. In terms of biological role, converts proline to delta-1-pyrroline-5-carboxylate. Important for the use of proline as a sole carbon and energy source or a sole nitrogen source. In Bacillus subtilis (strain 168), this protein is Proline dehydrogenase 2.